The following is an 89-amino-acid chain: UPF0147 protein TV0625 (89 aa).

It belongs to the UPF0147 family.

This chain is UPF0147 protein TV0625, found in Thermoplasma volcanium (strain ATCC 51530 / DSM 4299 / JCM 9571 / NBRC 15438 / GSS1).